The chain runs to 266 residues: MSNYYAALALTLLAGISTGIGSLLALMVNHTNKKFLTFALGFSAGIMLYVSFVEIMPQSGQTLAEEMPKHAAGWITTAAFFGGMLFIWLIDQLVPNFENPHEMSMIGTMNTAPSEEARLHRMGIFTAAAIAIHNFPEGLAVFFSALSNPDLGVVIAATIALHNIPEGMAVAVPIYFATKSRMKAFSYSFLSGLAEPLGAIIGYALLKPFLSPLVFACVLGGVAGIMVYISLDELLPAAEEYGEHHIAISGLILGMGVMAVSLLMLA.

Transmembrane regions (helical) follow at residues 8–28, 35–55, 70–90, 123–143, 152–172, 185–205, 209–229, and 246–266; these read LALTLLAGISTGIGSLLALMV, FLTFALGFSAGIMLYVSFVEI, HAAGWITTAAFFGGMLFIWLI, GIFTAAAIAIHNFPEGLAVFF, GVVIAATIALHNIPEGMAVAV, FSYSFLSGLAEPLGAIIGYAL, FLSPLVFACVLGGVAGIMVYI, and IAISGLILGMGVMAVSLLMLA. Positions 134 and 137 each coordinate Fe(2+). Residues Glu-137 and His-162 each coordinate Zn(2+). Positions 163, 166, and 195 each coordinate Fe(2+). Glu-166 contributes to the Zn(2+) binding site.

Belongs to the ZIP transporter (TC 2.A.5) family. ZupT subfamily.

Its subcellular location is the cell inner membrane. The enzyme catalyses Zn(2+)(in) = Zn(2+)(out). Functionally, mediates zinc uptake. May also transport other divalent cations. The polypeptide is Zinc transporter ZupT (Chlorobium limicola (strain DSM 245 / NBRC 103803 / 6330)).